Reading from the N-terminus, the 434-residue chain is 23S rRNA (uracil(1939)-C(5))-methyltransferase RlmD (434 aa).

The TRAM domain maps to 10–68 (RVTTRQIITVTVNDLDPFGQGVARHQGKALFVSGVLPHEQAEVVLVEDKKQYARAEVKR). 4 residues coordinate [4Fe-4S] cluster: Cys81, Cys87, Cys90, and Cys162. Residues Gln265, Phe294, Asn299, Glu315, Asn342, and Asp363 each contribute to the S-adenosyl-L-methionine site. Cys389 serves as the catalytic Nucleophile.

This sequence belongs to the class I-like SAM-binding methyltransferase superfamily. RNA M5U methyltransferase family. RlmD subfamily.

It catalyses the reaction uridine(1939) in 23S rRNA + S-adenosyl-L-methionine = 5-methyluridine(1939) in 23S rRNA + S-adenosyl-L-homocysteine + H(+). Its function is as follows. Catalyzes the formation of 5-methyl-uridine at position 1939 (m5U1939) in 23S rRNA. This is 23S rRNA (uracil(1939)-C(5))-methyltransferase RlmD from Klebsiella pneumoniae subsp. pneumoniae (strain ATCC 700721 / MGH 78578).